The following is a 1209-amino-acid chain: MTVPKEMPEKWARAQAPPSWSRKKPSWGTEEERRARANDREYNEKFQYASNCIKTSKYNILTFLPVNLFEQFQEVANTYFLFLLILQLIPQISSLSWFTTIVPLVLVLTITAVKDATDDYFRHKSDNQVNNRQSQVLINGILQQEQWMNVCVGDIIKLENNQFVAADLLLLSSSEPHGLCYIETAELDGETNMKVRQAIPVTSELGDISKLAKFDGEVICEPPNNKLDKFSGTLYWKENKFPLSNQNMLLRGCVLRNTEWCFGLVIFAGPDTKLMQNSGRTKFKRTSIDRLMNTLVLWIFGFLVCMGVILAIGNAIWEHEVGMRFQVYLPWDEAVDSAFFSGFLSFWSYIIILNTVVPISLYVSVEVIRLGHSYFINWDKKMFCMKKRTPAEARTTTLNEELGQVEYIFSDKTGTLTQNIMVFNKCSINGHSYGDVFDVLGHKAELGERPEPVDFSFNPLADKKFLFWDPSLLEAVKIGDPHTHEFFRLLSLCHTVMSEEKNEGELYYKAQSPDEGALVTAARNFGFVFRSRTPKTITVHEMGTAITYQLLAILDFNNIRKRMSVIVRNPEGKIRLYCKGADTILLDRLHHSTQELLNTTMDHLNEYAGEGLRTLVLAYKDLDEEYYEEWAERRLQASLAQDSREDRLASIYEEVENNMMLLGATAIEDKLQQGVPETIALLTLANIKIWVLTGDKQETAVNIGYSCKMLTDDMTEVFIVTGHTVLEVREELRKAREKMMDSSRSVGNGFTYQDKLSSSKLTSVLEAVAGEYALVINGHSLAHALEADMELEFLETACACKAVICCRVTPLQKAQVVELVKKYKKAVTLAIGDGANDVSMIKTAHIGVGISGQEGIQAVLASDYSFSQFKFLQRLLLVHGRWSYLRMCKFLCYFFYKNFAFTMVHFWFGFFCGFSAQTVYDQYFITLYNIVYTSLPVLAMGVFDQDVPEQRSMEYPKLYEPGQLNLLFNKREFFICIAQGIYTSVLMFFIPYGVFADATRDDGTQLADYQSFAVTVATSLVIVVSVQIGLDTGYWTAINHFFIWGSLAVYFAILFAMHSNGLFDMFPNQFRFVGNAQNTLAQPTVWLTIVLTTVVCIMPVVAFRFLRLNLKPDLSDTVRYTQLVRKKQKAQHRCMRRVGRTGSRRSGYAFSHQEGFGELIMSGKNMRLSSLALSSFTTRSSSSWIESLRRKKSDSASSPSGGADKPLKG.

A compositionally biased stretch (basic and acidic residues) spans 1 to 12; it reads MTVPKEMPEKWA. The segment at 1–36 is disordered; that stretch reads MTVPKEMPEKWARAQAPPSWSRKKPSWGTEEERRAR. Residues 1–64 are Cytoplasmic-facing; sequence MTVPKEMPEK…TSKYNILTFL (64 aa). Residues 65 to 86 traverse the membrane as a helical segment; the sequence is PVNLFEQFQEVANTYFLFLLIL. Residues 87–92 are Exoplasmic loop-facing; the sequence is QLIPQI. Residues 93–112 form a helical membrane-spanning segment; sequence SSLSWFTTIVPLVLVLTITA. The Cytoplasmic segment spans residues 113–295; sequence VKDATDDYFR…TSIDRLMNTL (183 aa). A helical membrane pass occupies residues 296–317; it reads VLWIFGFLVCMGVILAIGNAIW. Residues 318–346 lie on the Exoplasmic loop side of the membrane; it reads EHEVGMRFQVYLPWDEAVDSAFFSGFLSF. The chain crosses the membrane as a helical span at residues 347-368; that stretch reads WSYIIILNTVVPISLYVSVEVI. Topologically, residues 369-889 are cytoplasmic; it reads RLGHSYFINW…GRWSYLRMCK (521 aa). The 4-aspartylphosphate intermediate role is filled by D411. ATP contacts are provided by D411, K412, T413, E515, F556, K579, R613, T693, G694, D695, R807, and K813. A Mg(2+)-binding site is contributed by D411. T413 contacts Mg(2+). D833 serves as a coordination point for Mg(2+). ATP contacts are provided by N836 and D837. D837 serves as a coordination point for Mg(2+). Residues 890-910 traverse the membrane as a helical segment; that stretch reads FLCYFFYKNFAFTMVHFWFGF. The Exoplasmic loop segment spans residues 911-922; that stretch reads FCGFSAQTVYDQ. A helical transmembrane segment spans residues 923 to 942; it reads YFITLYNIVYTSLPVLAMGV. At 943–972 the chain is on the cytoplasmic side; it reads FDQDVPEQRSMEYPKLYEPGQLNLLFNKRE. The helical transmembrane segment at 973–994 threads the bilayer; the sequence is FFICIAQGIYTSVLMFFIPYGV. Residues 995 to 1008 lie on the Exoplasmic loop side of the membrane; it reads FADATRDDGTQLAD. A helical transmembrane segment spans residues 1009-1031; that stretch reads YQSFAVTVATSLVIVVSVQIGLD. Residues 1032-1037 are Cytoplasmic-facing; the sequence is TGYWTA. A helical membrane pass occupies residues 1038–1058; sequence INHFFIWGSLAVYFAILFAMH. The Exoplasmic loop segment spans residues 1059-1078; sequence SNGLFDMFPNQFRFVGNAQN. The helical transmembrane segment at 1079-1103 threads the bilayer; that stretch reads TLAQPTVWLTIVLTTVVCIMPVVAF. At 1104 to 1209 the chain is on the cytoplasmic side; sequence RFLRLNLKPD…SGGADKPLKG (106 aa). At S1175 the chain carries Phosphoserine. Positions 1181-1209 are disordered; the sequence is SSSWIESLRRKKSDSASSPSGGADKPLKG. Residues 1195–1209 are compositionally biased toward low complexity; the sequence is SASSPSGGADKPLKG.

Belongs to the cation transport ATPase (P-type) (TC 3.A.3) family. Type IV subfamily. In terms of assembly, component of a P4-ATPase flippase complex which consists of a catalytic alpha subunit ATP8B2 and an accessory beta subunit TMEM30A or TMEM30B. Mg(2+) serves as cofactor. Isoform 3 is ubiquitous, with highest expression in aorta, cerebellum and uterus.

The protein localises to the cell membrane. The protein resides in the endoplasmic reticulum membrane. It catalyses the reaction ATP + H2O + phospholipidSide 1 = ADP + phosphate + phospholipidSide 2.. The enzyme catalyses a 1,2-diacyl-sn-glycero-3-phosphocholine(out) + ATP + H2O = a 1,2-diacyl-sn-glycero-3-phosphocholine(in) + ADP + phosphate + H(+). Functionally, catalytic component of P4-ATPase flippase complex, which catalyzes the hydrolysis of ATP coupled to the transport of phosphatidylcholine (PC) from the outer to the inner leaflet of the plasma membrane. May contribute to the maintenance of membrane lipid asymmetry. The protein is Phospholipid-transporting ATPase ID of Homo sapiens (Human).